The primary structure comprises 392 residues: Bifunctional enzyme Fae/Hps (392 aa).

Positions 1-161 are formaldehyde-activating enzyme; sequence MFLVGEALIG…YEKERSVHPV (161 aa). H17 acts as the Proton donor in catalysis. Substrate contacts are provided by D19, L48, K66, T68, and Q83. The segment at 162 to 392 is 3-hexulose-6-phosphate synthase; that stretch reads MGYRVMRLWD…IDQYRIMTDF (231 aa).

It in the N-terminal section; belongs to the formaldehyde-activating enzyme family. The protein in the C-terminal section; belongs to the HPS/KGPDC family. HPS subfamily.

It catalyses the reaction 5,6,7,8-tetrahydromethanopterin + formaldehyde = 5,10-methylenetetrahydromethanopterin + H2O. The catalysed reaction is D-ribulose 5-phosphate + formaldehyde = D-arabino-hex-3-ulose 6-phosphate. The protein operates within carbohydrate biosynthesis; D-ribose 5-phosphate biosynthesis. In terms of biological role, catalyzes the condensation of formaldehyde with tetrahydromethanopterin (H(4)MPT) to 5,10-methylenetetrahydromethanopterin. Its function is as follows. Catalyzes the reversible formation of ribulose-5-phosphate and formaldehyde from 3-hexulose-6-phosphate. This is Bifunctional enzyme Fae/Hps from Methanothrix thermoacetophila (strain DSM 6194 / JCM 14653 / NBRC 101360 / PT) (Methanosaeta thermophila).